A 416-amino-acid chain; its full sequence is Adenylosuccinate synthetase (416 aa).

Residues 13-19 (GDEGKGK) and 41-43 (GHT) contribute to the GTP site. Catalysis depends on Asp14, which acts as the Proton acceptor. 2 residues coordinate Mg(2+): Asp14 and Gly41. IMP is bound by residues 14–17 (DEGK), 39–42 (NAGH), Thr126, Arg140, Gln220, Thr235, and Arg299. The Proton donor role is filled by His42. 295-301 (VSTGRKR) is a binding site for substrate. Residues Arg301, 327–329 (KLD), and 405–407 (STS) each bind GTP.

It belongs to the adenylosuccinate synthetase family. In terms of assembly, homodimer. Mg(2+) is required as a cofactor.

Its subcellular location is the cytoplasm. It catalyses the reaction IMP + L-aspartate + GTP = N(6)-(1,2-dicarboxyethyl)-AMP + GDP + phosphate + 2 H(+). The protein operates within purine metabolism; AMP biosynthesis via de novo pathway; AMP from IMP: step 1/2. Functionally, plays an important role in the de novo pathway of purine nucleotide biosynthesis. Catalyzes the first committed step in the biosynthesis of AMP from IMP. This Campylobacter lari (strain RM2100 / D67 / ATCC BAA-1060) protein is Adenylosuccinate synthetase.